A 492-amino-acid polypeptide reads, in one-letter code: Cholesteryl ester transfer protein (492 aa).

The N-terminal stretch at Met-1–Ala-17 is a signal peptide. A disulfide bridge links Cys-160 with Cys-201. Residue Asn-257 is glycosylated (N-linked (GlcNAc...) asparagine).

The protein belongs to the BPI/LBP/Plunc superfamily. BPI/LBP family.

The protein localises to the secreted. The enzyme catalyses cholesteryl (9Z-octadecenoate)(in) = cholesteryl (9Z-octadecenoate)(out). The catalysed reaction is 1,2,3-tri-(9Z-octadecenoyl)-glycerol(in) = 1,2,3-tri-(9Z-octadecenoyl)-glycerol(out). It carries out the reaction cholesteryl (9Z,12Z)-octadecadienoate(in) = cholesteryl (9Z,12Z)-octadecadienoate(out). Functionally, involved in the transfer of neutral lipids, including cholesteryl ester and triglyceride, among lipoprotein particles. Allows the net movement of cholesteryl ester from high density lipoproteins/HDL to triglyceride-rich very low density lipoproteins/VLDL, and the equimolar transport of triglyceride from VLDL to HDL. Regulates the reverse cholesterol transport, by which excess cholesterol is removed from peripheral tissues and returned to the liver for elimination. This is Cholesteryl ester transfer protein from Cricetulus griseus (Chinese hamster).